A 182-amino-acid chain; its full sequence is NADH-quinone oxidoreductase subunit I (182 aa).

4Fe-4S ferredoxin-type domains are found at residues 52 to 82 and 92 to 121; these read LTRD…LQKA and EFFR…LTPD. 8 residues coordinate [4Fe-4S] cluster: C62, C65, C68, C72, C101, C104, C107, and C111.

It belongs to the complex I 23 kDa subunit family. NDH-1 is composed of 13 different subunits. Subunits NuoA, H, J, K, L, M, N constitute the membrane sector of the complex. The cofactor is [4Fe-4S] cluster.

The protein localises to the cell inner membrane. It catalyses the reaction a quinone + NADH + 5 H(+)(in) = a quinol + NAD(+) + 4 H(+)(out). Its function is as follows. NDH-1 shuttles electrons from NADH, via FMN and iron-sulfur (Fe-S) centers, to quinones in the respiratory chain. The immediate electron acceptor for the enzyme in this species is believed to be ubiquinone. Couples the redox reaction to proton translocation (for every two electrons transferred, four hydrogen ions are translocated across the cytoplasmic membrane), and thus conserves the redox energy in a proton gradient. In Pseudomonas entomophila (strain L48), this protein is NADH-quinone oxidoreductase subunit I.